Consider the following 233-residue polypeptide: Large ribosomal subunit protein uL1 (233 aa).

It belongs to the universal ribosomal protein uL1 family. Part of the 50S ribosomal subunit.

Functionally, binds directly to 23S rRNA. The L1 stalk is quite mobile in the ribosome, and is involved in E site tRNA release. Its function is as follows. Protein L1 is also a translational repressor protein, it controls the translation of the L11 operon by binding to its mRNA. In Brucella suis (strain ATCC 23445 / NCTC 10510), this protein is Large ribosomal subunit protein uL1.